The primary structure comprises 423 residues: Ornithine cyclodeaminase (423 aa).

NAD(+)-binding residues include N241, A242, D320, T352, M353, L354, H355, D373, D396, and V397.

Belongs to the AgrE/ArgZ ornithine cyclodeaminase family. The cofactor is NAD(+).

The enzyme catalyses L-ornithine = L-proline + NH4(+). Its function is as follows. Catalyzes the conversion of ornithine to proline, with the release of ammonia. This Methanocaldococcus jannaschii (strain ATCC 43067 / DSM 2661 / JAL-1 / JCM 10045 / NBRC 100440) (Methanococcus jannaschii) protein is Ornithine cyclodeaminase.